Consider the following 105-residue polypeptide: Heat shock protein HspQ (105 aa).

Belongs to the HspQ family.

It is found in the cytoplasm. In terms of biological role, involved in the degradation of certain denaturated proteins, including DnaA, during heat shock stress. This Baumannia cicadellinicola subsp. Homalodisca coagulata protein is Heat shock protein HspQ.